Here is a 562-residue protein sequence, read N- to C-terminus: Glutamate--tRNA ligase (562 aa).

The 'HIGH' region signature appears at 104–114; it reads PNPDFYMTLGN.

The protein belongs to the class-I aminoacyl-tRNA synthetase family. Glutamate--tRNA ligase type 2 subfamily.

It is found in the cytoplasm. The catalysed reaction is tRNA(Glu) + L-glutamate + ATP = L-glutamyl-tRNA(Glu) + AMP + diphosphate. Catalyzes the attachment of glutamate to tRNA(Glu) in a two-step reaction: glutamate is first activated by ATP to form Glu-AMP and then transferred to the acceptor end of tRNA(Glu). The sequence is that of Glutamate--tRNA ligase from Ignicoccus hospitalis (strain KIN4/I / DSM 18386 / JCM 14125).